The primary structure comprises 389 residues: 26S proteasome regulatory subunit 10B (389 aa).

Lys72 carries the N6-acetyllysine modification. 174–181 (GPPGTGKT) is an ATP binding site. Lys206 is subject to N6-acetyllysine. Ser244 bears the Phosphoserine mark.

It belongs to the AAA ATPase family. As to quaternary structure, component of the 19S proteasome regulatory particle complex. The 26S proteasome consists of a 20S core particle (CP) and two 19S regulatory subunits (RP). The regulatory particle is made of a lid composed of 9 subunits, a base containing 6 ATPases including PSMC6 and few additional components. Interacts with PAAF1.

It is found in the cytoplasm. The protein localises to the nucleus. Functionally, component of the 26S proteasome, a multiprotein complex involved in the ATP-dependent degradation of ubiquitinated proteins. This complex plays a key role in the maintenance of protein homeostasis by removing misfolded or damaged proteins, which could impair cellular functions, and by removing proteins whose functions are no longer required. Therefore, the proteasome participates in numerous cellular processes, including cell cycle progression, apoptosis, or DNA damage repair. PSMC6 belongs to the heterohexameric ring of AAA (ATPases associated with diverse cellular activities) proteins that unfolds ubiquitinated target proteins that are concurrently translocated into a proteolytic chamber and degraded into peptides. This Homo sapiens (Human) protein is 26S proteasome regulatory subunit 10B (PSMC6).